The chain runs to 159 residues: Transcription elongation factor GreA (159 aa).

It belongs to the GreA/GreB family.

Functionally, necessary for efficient RNA polymerase transcription elongation past template-encoded arresting sites. The arresting sites in DNA have the property of trapping a certain fraction of elongating RNA polymerases that pass through, resulting in locked ternary complexes. Cleavage of the nascent transcript by cleavage factors such as GreA or GreB allows the resumption of elongation from the new 3'terminus. GreA releases sequences of 2 to 3 nucleotides. This Orientia tsutsugamushi (strain Ikeda) (Rickettsia tsutsugamushi) protein is Transcription elongation factor GreA.